The primary structure comprises 324 residues: Glycerol-3-phosphate dehydrogenase [NAD(P)+] (324 aa).

Residues Phe11, Arg31, and Lys107 each coordinate NADPH. Residues Lys107 and Gly135 each contribute to the sn-glycerol 3-phosphate site. Residue Ala139 coordinates NADPH. Residues Lys190, Asp245, Ser255, Arg256, and Asn257 each coordinate sn-glycerol 3-phosphate. Lys190 (proton acceptor) is an active-site residue. Position 256 (Arg256) interacts with NADPH. Residues Val278 and Glu279 each contribute to the NADPH site.

It belongs to the NAD-dependent glycerol-3-phosphate dehydrogenase family.

It is found in the cytoplasm. The enzyme catalyses sn-glycerol 3-phosphate + NAD(+) = dihydroxyacetone phosphate + NADH + H(+). The catalysed reaction is sn-glycerol 3-phosphate + NADP(+) = dihydroxyacetone phosphate + NADPH + H(+). It participates in membrane lipid metabolism; glycerophospholipid metabolism. In terms of biological role, catalyzes the reduction of the glycolytic intermediate dihydroxyacetone phosphate (DHAP) to sn-glycerol 3-phosphate (G3P), the key precursor for phospholipid synthesis. This chain is Glycerol-3-phosphate dehydrogenase [NAD(P)+], found in Anaplasma phagocytophilum (strain HZ).